Here is a 776-residue protein sequence, read N- to C-terminus: Structure-specific endonuclease subunit SLX4 (776 aa).

Positions 201 to 217 are enriched in acidic residues; that stretch reads EEQMVSDDNSSTEDDTD. Disordered regions lie at residues 201 to 223, 263 to 283, and 507 to 531; these read EEQM…QNDG, KSLQ…PDQN, and PPLD…KPHS.

The protein belongs to the SLX4 family. Forms a heterodimer with SLX1. In terms of processing, phosphorylated in response to DNA damage.

It is found in the nucleus. Regulatory subunit of the SLX1-SLX4 structure-specific endonuclease that resolves DNA secondary structures generated during DNA repair and recombination. Has endonuclease activity towards branched DNA substrates, introducing single-strand cuts in duplex DNA close to junctions with ss-DNA. This Candida albicans (strain SC5314 / ATCC MYA-2876) (Yeast) protein is Structure-specific endonuclease subunit SLX4.